The primary structure comprises 189 residues: HGPRTase-like protein (189 aa).

This sequence belongs to the purine/pyrimidine phosphoribosyltransferase family. Archaeal HPRT subfamily.

Its function is as follows. May catalyze a purine salvage reaction, the substrate is unknown. The chain is HGPRTase-like protein from Halorubrum lacusprofundi (strain ATCC 49239 / DSM 5036 / JCM 8891 / ACAM 34).